A 142-amino-acid polypeptide reads, in one-letter code: Large ribosomal subunit protein uL11 (142 aa).

It belongs to the universal ribosomal protein uL11 family. Part of the ribosomal stalk of the 50S ribosomal subunit. Interacts with L10 and the large rRNA to form the base of the stalk. L10 forms an elongated spine to which L12 dimers bind in a sequential fashion forming a multimeric L10(L12)X complex. Post-translationally, one or more lysine residues are methylated.

In terms of biological role, forms part of the ribosomal stalk which helps the ribosome interact with GTP-bound translation factors. The polypeptide is Large ribosomal subunit protein uL11 (Dichelobacter nodosus (strain VCS1703A)).